The following is a 308-amino-acid chain: Ribosomal protein L11 methyltransferase (308 aa).

S-adenosyl-L-methionine is bound by residues Thr-157, Gly-178, Asp-200, and Asn-243.

Belongs to the methyltransferase superfamily. PrmA family.

The protein resides in the cytoplasm. It carries out the reaction L-lysyl-[protein] + 3 S-adenosyl-L-methionine = N(6),N(6),N(6)-trimethyl-L-lysyl-[protein] + 3 S-adenosyl-L-homocysteine + 3 H(+). Its function is as follows. Methylates ribosomal protein L11. The protein is Ribosomal protein L11 methyltransferase of Desulforamulus reducens (strain ATCC BAA-1160 / DSM 100696 / MI-1) (Desulfotomaculum reducens).